The primary structure comprises 333 residues: Photosystem II assembly lipoprotein Ycf48 (333 aa).

A signal peptide spans 1 to 23 (MNRLLSSAVNLLLVLVLGVGLSG). A lipid anchor (N-palmitoyl cysteine) is attached at Cys-24. Cys-24 is lipidated: S-diacylglycerol cysteine.

This sequence belongs to the Ycf48 family. Part of early PSII assembly complexes which includes D1 (psbA) and PsbI; not found in mature PSII. Binds to the lumenal side of PSII complexes. Interacts with YidC.

It is found in the cellular thylakoid membrane. Functionally, a factor required for optimal assembly of photosystem II (PSII), acting in the early stages of PSII assembly. Also plays a role in replacement of photodamaged D1 (psbA). Assists YidC in synthesis of chlorophyll-binding proteins. The protein is Photosystem II assembly lipoprotein Ycf48 of Synechococcus sp. (strain CC9902).